The sequence spans 565 residues: Putative ribonucleoside-diphosphate reductase large subunit (565 aa).

Substrate contacts are provided by residues S60, 74 to 75 (SC), G103, 256 to 260 (NLCNE), and 400 to 404 (PNANS). C75 and C273 are disulfide-bonded. N256 functions as the Proton acceptor in the catalytic mechanism. The Cysteine radical intermediate role is filled by C258. E260 functions as the Proton acceptor in the catalytic mechanism.

This sequence belongs to the ribonucleoside diphosphate reductase large chain family. As to quaternary structure, heterotetramer composed of a homodimer of the large subunit (R1) and a homodimer of the small subunit (R2). Larger multisubunit protein complex are also active, composed of (R1)n(R2)n.

The enzyme catalyses a 2'-deoxyribonucleoside 5'-diphosphate + [thioredoxin]-disulfide + H2O = a ribonucleoside 5'-diphosphate + [thioredoxin]-dithiol. Under complex allosteric control mediated by deoxynucleoside triphosphates and ATP binding. The type of nucleotide bound at the specificity site determines substrate preference. It seems probable that ATP makes the enzyme reduce CDP and UDP, dGTP favors ADP reduction and dTTP favors GDP reduction. Functionally, ribonucleoside-diphosphate reductase holoenzyme provides the precursors necessary for viral DNA synthesis. Allows virus growth in non-dividing cells. Catalyzes the biosynthesis of deoxyribonucleotides from the corresponding ribonucleotides. The sequence is that of Putative ribonucleoside-diphosphate reductase large subunit from Frog virus 3 (isolate Goorha) (FV-3).